Consider the following 656-residue polypeptide: tRNA 5-methylaminomethyl-2-thiouridine biosynthesis bifunctional protein MnmC (656 aa).

Residues 1–236 (MTDPLIPAVL…KRAMLVGRFA (236 aa)) form a tRNA (mnm(5)s(2)U34)-methyltransferase region. Residues 260 to 656 (IGTGLAGCAV…LRALRQGTVS (397 aa)) form an FAD-dependent cmnm(5)s(2)U34 oxidoreductase region.

This sequence in the N-terminal section; belongs to the methyltransferase superfamily. tRNA (mnm(5)s(2)U34)-methyltransferase family. The protein in the C-terminal section; belongs to the DAO family. FAD serves as cofactor.

The protein resides in the cytoplasm. The catalysed reaction is 5-aminomethyl-2-thiouridine(34) in tRNA + S-adenosyl-L-methionine = 5-methylaminomethyl-2-thiouridine(34) in tRNA + S-adenosyl-L-homocysteine + H(+). Catalyzes the last two steps in the biosynthesis of 5-methylaminomethyl-2-thiouridine (mnm(5)s(2)U) at the wobble position (U34) in tRNA. Catalyzes the FAD-dependent demodification of cmnm(5)s(2)U34 to nm(5)s(2)U34, followed by the transfer of a methyl group from S-adenosyl-L-methionine to nm(5)s(2)U34, to form mnm(5)s(2)U34. The sequence is that of tRNA 5-methylaminomethyl-2-thiouridine biosynthesis bifunctional protein MnmC from Paraburkholderia xenovorans (strain LB400).